The sequence spans 267 residues: Tryptophan synthase alpha chain (267 aa).

Active-site proton acceptor residues include Glu-47 and Asp-58.

The protein belongs to the TrpA family. In terms of assembly, tetramer of two alpha and two beta chains.

It carries out the reaction (1S,2R)-1-C-(indol-3-yl)glycerol 3-phosphate + L-serine = D-glyceraldehyde 3-phosphate + L-tryptophan + H2O. It functions in the pathway amino-acid biosynthesis; L-tryptophan biosynthesis; L-tryptophan from chorismate: step 5/5. The alpha subunit is responsible for the aldol cleavage of indoleglycerol phosphate to indole and glyceraldehyde 3-phosphate. This Chlorobaculum parvum (strain DSM 263 / NCIMB 8327) (Chlorobium vibrioforme subsp. thiosulfatophilum) protein is Tryptophan synthase alpha chain.